Reading from the N-terminus, the 538-residue chain is Cytochrome c-552 (538 aa).

The N-terminal stretch at 1-55 (MKIYLRFVWILIIILNFLLNLFITTNGVIIVNAFKKSLIVAASFASLSLFNSATA) is a signal peptide. Histidine 133 serves as a coordination point for heme c. Residues cysteine 161, cysteine 164, and lysine 165 each coordinate heme. Residues cysteine 199, cysteine 202, histidine 203, cysteine 264, cysteine 267, and histidine 268 each coordinate heme c. 4 residues coordinate Ca(2+): glutamate 270, tyrosine 271, lysine 316, and glutamine 318. Tyrosine 271 contacts substrate. Histidine 319 is a binding site for substrate. Residues histidine 330, cysteine 337, cysteine 340, histidine 341, histidine 356, cysteine 369, cysteine 372, histidine 373, and histidine 448 each coordinate heme c.

Belongs to the cytochrome c-552 family. Requires Ca(2+) as cofactor. Heme c serves as cofactor.

It localises to the periplasm. It catalyses the reaction 6 Fe(III)-[cytochrome c] + NH4(+) + 2 H2O = 6 Fe(II)-[cytochrome c] + nitrite + 8 H(+). Its pathway is nitrogen metabolism; nitrate reduction (assimilation). Functionally, catalyzes the reduction of nitrite to ammonia, consuming six electrons in the process. The sequence is that of Cytochrome c-552 from Haemophilus influenzae (strain 86-028NP).